A 105-amino-acid chain; its full sequence is Prokineticin-1 (105 aa).

A signal peptide spans 1–19 (MRGAVHIFIMLLLATASDC). 5 cysteine pairs are disulfide-bonded: Cys-26/Cys-38, Cys-32/Cys-50, Cys-37/Cys-78, Cys-60/Cys-86, and Cys-80/Cys-96.

Belongs to the AVIT (prokineticin) family. In terms of tissue distribution, highly expressed in liver and ovary and weakly expressed in testis and placenta. Expressed in mucosa and mesenchyme of embryonic gut during enteric nervous system development (at protein level). Predominantly expressed in kidney and liver. Also expressed in lung, ovary, placenta and testis. In fetal liver, is restricted to and highly expressed in hepatocytes. In adult kidney, expression is restricted to the endothelial tubule cells. In placenta, expressed throughout gestation.

It is found in the secreted. In terms of biological role, potently contracts gastrointestinal (GI) smooth muscle. Induces proliferation, migration and fenestration (the formation of membrane discontinuities) in capillary endothelial cells. Induces proliferation and differentiation, but not migration, of enteric neural crest cells. Directly influences neuroblastoma progression by promoting the proliferation and migration of neuroblastoma cells. Positively regulates PTGS2 expression and prostaglandin synthesis. May play a role in placentation. May play a role in normal and pathological testis angiogenesis. This chain is Prokineticin-1, found in Mus musculus (Mouse).